The chain runs to 189 residues: GTP cyclohydrolase 1 (189 aa).

Cysteine 78, histidine 81, and cysteine 150 together coordinate Zn(2+).

The protein belongs to the GTP cyclohydrolase I family. Toroid-shaped homodecamer, composed of two pentamers of five dimers.

It catalyses the reaction GTP + H2O = 7,8-dihydroneopterin 3'-triphosphate + formate + H(+). Its pathway is cofactor biosynthesis; 7,8-dihydroneopterin triphosphate biosynthesis; 7,8-dihydroneopterin triphosphate from GTP: step 1/1. The protein is GTP cyclohydrolase 1 of Listeria monocytogenes serovar 1/2a (strain ATCC BAA-679 / EGD-e).